A 295-amino-acid chain; its full sequence is Chromatin modification-related protein YNG2 (295 aa).

Residues 151 to 208 (NGTAGSGSSSGRKRPASSSSANGKGQKRKQQKKERSRSHQRAGTVSRDVSPNAGIGRD) form a disordered region. Residues 156–171 (SGSSSGRKRPASSSSA) show a composition bias toward low complexity. Basic residues predominate over residues 175 to 190 (GQKRKQQKKERSRSHQ). The PHD-type zinc-finger motif lies at 233-282 (QLYCFCQRVSYGEMVACDGPNCKYEWFHYSCVNLTEPPKGQWYCPECRLE). Residues Cys236, Cys238, Cys249, Cys254, His260, Cys263, Cys276, and Cys279 each coordinate Zn(2+).

It belongs to the ING family. In terms of assembly, interacts with H3K4me3 and to a lesser extent with H3K4me2. Component of the NuA4 histone acetyltransferase complex.

It localises to the nucleus. In terms of biological role, component of the NuA4 histone acetyltransferase complex which is involved in transcriptional activation of selected genes principally by acetylation of nucleosomal histone H4 and H2A. The NuA4 complex is also involved in DNA repair. Involved in cell cycle progression and meiosis. The sequence is that of Chromatin modification-related protein YNG2 (YNG2) from Kluyveromyces lactis (strain ATCC 8585 / CBS 2359 / DSM 70799 / NBRC 1267 / NRRL Y-1140 / WM37) (Yeast).